The following is a 521-amino-acid chain: Bifunctional dihydrofolate reductase-thymidylate synthase (521 aa).

Residues 22-232 (AFSLVVAVDE…TKYYFEKLIP (211 aa)) form the DHFR domain. Val26 is a substrate binding site. Residues Ala28 and 34-40 (GIGDGRS) each bind NADP(+). Asp48 contacts substrate. NADP(+) contacts are provided by residues 78–80 (RKT) and 99–102 (LSST). Substrate-binding residues include Ile154, Tyr160, and Thr178. 155–162 (GGGSVYAE) contacts NADP(+). The segment at 237–521 (EEQYLSLVDR…YPPISMKMAV (285 aa)) is thymidylate synthase. Arg257 contributes to the dUMP binding site. Cys403 is an active-site residue. DUMP is bound by residues His404, 422–426 (QRSCD), Asn434, and 464–466 (HVY).

This sequence in the N-terminal section; belongs to the dihydrofolate reductase family. It in the C-terminal section; belongs to the thymidylate synthase family. As to quaternary structure, homodimer.

It carries out the reaction (6S)-5,6,7,8-tetrahydrofolate + NADP(+) = 7,8-dihydrofolate + NADPH + H(+). The enzyme catalyses dUMP + (6R)-5,10-methylene-5,6,7,8-tetrahydrofolate = 7,8-dihydrofolate + dTMP. It participates in cofactor biosynthesis; tetrahydrofolate biosynthesis; 5,6,7,8-tetrahydrofolate from 7,8-dihydrofolate: step 1/1. Its function is as follows. Bifunctional enzyme. Involved in de novo dTMP biosynthesis. Key enzyme in folate metabolism. Catalyzes an essential reaction for de novo glycine and purine synthesis, DNA precursor synthesis, and for the conversion of dUMP to dTMP. In Trypanosoma cruzi, this protein is Bifunctional dihydrofolate reductase-thymidylate synthase.